A 344-amino-acid polypeptide reads, in one-letter code: S-methyl-5'-thioadenosine phosphorylase (344 aa).

Residues Thr45, 88-89, and 121-122 contribute to the phosphate site; these read RH and SA. Met238 serves as a coordination point for substrate. Residue Ser239 participates in phosphate binding. Residue 262-264 participates in substrate binding; the sequence is DYD.

It belongs to the PNP/MTAP phosphorylase family. MTAP subfamily. Homotrimer.

The protein resides in the cytoplasm. The protein localises to the nucleus. It carries out the reaction S-methyl-5'-thioadenosine + phosphate = 5-(methylsulfanyl)-alpha-D-ribose 1-phosphate + adenine. Its pathway is amino-acid biosynthesis; L-methionine biosynthesis via salvage pathway; S-methyl-5-thio-alpha-D-ribose 1-phosphate from S-methyl-5'-thioadenosine (phosphorylase route): step 1/1. Catalyzes the reversible phosphorylation of S-methyl-5'-thioadenosine (MTA) to adenine and 5-methylthioribose-1-phosphate. Involved in the breakdown of MTA, a major by-product of polyamine biosynthesis. Responsible for the first step in the methionine salvage pathway after MTA has been generated from S-adenosylmethionine. Has broad substrate specificity with 6-aminopurine nucleosides as preferred substrates. This is S-methyl-5'-thioadenosine phosphorylase from Candida albicans (strain SC5314 / ATCC MYA-2876) (Yeast).